Reading from the N-terminus, the 206-residue chain is MRMLWRSLALCGLALTLAPCAQAAEPIEGKTVYIDAGHGGEDSGAVGNGLFEKDINLAVSEHVTDKLKEEGANPVASRSDDHFLTLEERVAKASANQADLFVSIHVNSGVASASGTETYFQSDYEGENSRRLASDIQSQLVSSLQTRDRGVKESDFYVITYSQMPSVLAELGFITNSSDADKLGSEEYQQKAADAIVNGIDSYYDQ.

A MurNAc-LAA domain is found at V32–D201.

This sequence belongs to the N-acetylmuramoyl-L-alanine amidase 3 family.

This is an uncharacterized protein from Bacillus subtilis (strain 168).